We begin with the raw amino-acid sequence, 540 residues long: Chaperonin GroEL (540 aa).

ATP is bound by residues 30-33 (TLGP), lysine 51, 87-91 (DGTTT), glycine 415, 479-481 (NAA), and aspartate 495.

Belongs to the chaperonin (HSP60) family. As to quaternary structure, forms a cylinder of 14 subunits composed of two heptameric rings stacked back-to-back. Interacts with the co-chaperonin GroES.

Its subcellular location is the cytoplasm. The catalysed reaction is ATP + H2O + a folded polypeptide = ADP + phosphate + an unfolded polypeptide.. Functionally, together with its co-chaperonin GroES, plays an essential role in assisting protein folding. The GroEL-GroES system forms a nano-cage that allows encapsulation of the non-native substrate proteins and provides a physical environment optimized to promote and accelerate protein folding. The protein is Chaperonin GroEL of Raoultella ornithinolytica (Klebsiella ornithinolytica).